Reading from the N-terminus, the 83-residue chain is Kappa-actitoxin-Aer3a (83 aa).

The N-terminal stretch at Met-1–Ala-22 is a signal peptide. A propeptide spanning residues Gln-23–Arg-49 is cleaved from the precursor. A ShKT domain is found at Cys-51–Cys-83. 3 disulfides stabilise this stretch: Cys-51-Cys-83, Cys-60-Cys-76, and Cys-65-Cys-80.

It belongs to the sea anemone type 1 potassium channel toxin family. Type 1a subfamily.

The protein localises to the secreted. Its subcellular location is the nematocyst. Its function is as follows. Specifically, dose-dependently and potently blocks the voltage-gated potassium channel Kv1.1/KCNA1 (Ki=1.6 pM). Moderately blocks potassium channel heterotetramers formed by 3 subunits of Kv1.1/KCNA1 and 1 subunit of Kv1.2/KCNA2 (Ki=56 nM) and weakly blocks those formed by 2 subunits of Kv1.1/KCNA1 and 2 subunits of Kv1.2/KCNA2 (Ki=14 nM). The chain is Kappa-actitoxin-Aer3a from Anemonia erythraea (Sea anemone).